We begin with the raw amino-acid sequence, 121 residues long: uncharacterized protein (121 aa).

This sequence to E.coli YcjD and H.influenzae HI_1162.

This is an uncharacterized protein from Haemophilus influenzae (strain ATCC 51907 / DSM 11121 / KW20 / Rd).